A 185-amino-acid polypeptide reads, in one-letter code: Crossover junction endodeoxyribonuclease RuvC (185 aa).

Active-site residues include Asp-7, Glu-68, and Asp-141. The Mg(2+) site is built by Asp-7, Glu-68, and Asp-141.

It belongs to the RuvC family. In terms of assembly, homodimer which binds Holliday junction (HJ) DNA. The HJ becomes 2-fold symmetrical on binding to RuvC with unstacked arms; it has a different conformation from HJ DNA in complex with RuvA. In the full resolvosome a probable DNA-RuvA(4)-RuvB(12)-RuvC(2) complex forms which resolves the HJ. Requires Mg(2+) as cofactor.

It localises to the cytoplasm. It catalyses the reaction Endonucleolytic cleavage at a junction such as a reciprocal single-stranded crossover between two homologous DNA duplexes (Holliday junction).. Functionally, the RuvA-RuvB-RuvC complex processes Holliday junction (HJ) DNA during genetic recombination and DNA repair. Endonuclease that resolves HJ intermediates. Cleaves cruciform DNA by making single-stranded nicks across the HJ at symmetrical positions within the homologous arms, yielding a 5'-phosphate and a 3'-hydroxyl group; requires a central core of homology in the junction. The consensus cleavage sequence is 5'-(A/T)TT(C/G)-3'. Cleavage occurs on the 3'-side of the TT dinucleotide at the point of strand exchange. HJ branch migration catalyzed by RuvA-RuvB allows RuvC to scan DNA until it finds its consensus sequence, where it cleaves and resolves the cruciform DNA. This Mycobacterium sp. (strain MCS) protein is Crossover junction endodeoxyribonuclease RuvC.